We begin with the raw amino-acid sequence, 372 residues long: MQSVIAQAKRIVVKVGSSLVTNDGKGLDYDAIARWAAQIAKLRSIGKEVVLVSSGAIAEGMQRLGWVRRPREIHELQAAAAVGQMGLAQVYESQFGRYGIRTAQVLLTHADLADRERYLNARSTLLTLLSLGVVPIINENDTVVTDEIKFGDNDTLGALVTNLIEGDALVILTDQRGLYTADPRKDPNAEFVDEALAGTPELEQMAGGAGTSIGRGGMLTKILAAKRAAKSGAHTTIASGREANVLERLAAGEAIGTQLLAPTGRLTARKQWMADHLQLRGRVVIDAGAVEKLTSGGKSLLPIGVVEVQGEFARGEVIACVGADGREVARGITNYSSAEARLIARKPSSEIESVLGHLNEPELIHRDNLVLV.

An ATP-binding site is contributed by K14. Substrate-binding residues include S54, D141, and N153. 173-174 (TD) contacts ATP. Residues 280–358 (RGRVVIDAGA…SEIESVLGHL (79 aa)) form the PUA domain.

Belongs to the glutamate 5-kinase family.

It is found in the cytoplasm. The catalysed reaction is L-glutamate + ATP = L-glutamyl 5-phosphate + ADP. The protein operates within amino-acid biosynthesis; L-proline biosynthesis; L-glutamate 5-semialdehyde from L-glutamate: step 1/2. In terms of biological role, catalyzes the transfer of a phosphate group to glutamate to form L-glutamate 5-phosphate. In Cupriavidus pinatubonensis (strain JMP 134 / LMG 1197) (Cupriavidus necator (strain JMP 134)), this protein is Glutamate 5-kinase.